The following is a 298-amino-acid chain: Junctional adhesion molecule A (298 aa).

An N-terminal signal peptide occupies residues 1 to 28; that stretch reads MGTEARAGRRQLLVFTSVVLSSLALGRG. Ig-like V-type domains are found at residues 29–126 and 134–227; these read AVYT…VQLT and PTVH…EAVR. The Extracellular portion of the chain corresponds to 29–237; the sequence is AVYTSEPDVR…MEAAELNVGG (209 aa). 2 disulfides stabilise this stretch: Cys49–Cys108 and Cys152–Cys211. N-linked (GlcNAc...) asparagine glycosylation occurs at Asn184. Residues 238-258 traverse the membrane as a helical segment; that stretch reads IVAAVLVTLILLGFLILGIWF. Over 259-298 the chain is Cytoplasmic; that stretch reads AYRRGYFDRTKKGTSSKKVIYSQPAARSEGEFRQTSSFLV. 2 positions are modified to phosphoserine: Ser280 and Ser286.

This sequence belongs to the immunoglobulin superfamily. As to quaternary structure, interacts with the ninth PDZ domain of MPDZ. Interacts with the first PDZ domain of PARD3. The association between PARD3 and PARD6B probably disrupts this interaction. Interacts with ITGAL (via I-domain). Interacts with CD151. (Microbial infection) Interacts with calicivirus capsid protein. In terms of assembly, (Microbial infection) Interacts with the orthoreovirus sigma-1 capsid protein.

It localises to the cell junction. It is found in the tight junction. The protein localises to the cell membrane. Its function is as follows. Seems to play a role in epithelial tight junction formation. Appears early in primordial forms of cell junctions and recruits PARD3. The association of the PARD6-PARD3 complex may prevent the interaction of PARD3 with JAM1, thereby preventing tight junction assembly. Plays a role in regulating monocyte transmigration involved in integrity of epithelial barrier. Ligand for integrin alpha-L/beta-2 involved in memory T-cell and neutrophil transmigration. Involved in platelet activation. Functionally, (Microbial infection) Acts as a functional receptor for murine norovirus. In terms of biological role, (Microbial infection) In case of orthoreovirus infection, serves as receptor for the virus. The polypeptide is Junctional adhesion molecule A (F11R) (Felis catus (Cat)).